The primary structure comprises 95 residues: Aspartyl/glutamyl-tRNA(Asn/Gln) amidotransferase subunit C (95 aa).

This sequence belongs to the GatC family. Heterotrimer of A, B and C subunits.

The enzyme catalyses L-glutamyl-tRNA(Gln) + L-glutamine + ATP + H2O = L-glutaminyl-tRNA(Gln) + L-glutamate + ADP + phosphate + H(+). It carries out the reaction L-aspartyl-tRNA(Asn) + L-glutamine + ATP + H2O = L-asparaginyl-tRNA(Asn) + L-glutamate + ADP + phosphate + 2 H(+). In terms of biological role, allows the formation of correctly charged Asn-tRNA(Asn) or Gln-tRNA(Gln) through the transamidation of misacylated Asp-tRNA(Asn) or Glu-tRNA(Gln) in organisms which lack either or both of asparaginyl-tRNA or glutaminyl-tRNA synthetases. The reaction takes place in the presence of glutamine and ATP through an activated phospho-Asp-tRNA(Asn) or phospho-Glu-tRNA(Gln). The polypeptide is Aspartyl/glutamyl-tRNA(Asn/Gln) amidotransferase subunit C (Pseudomonas paraeruginosa (strain DSM 24068 / PA7) (Pseudomonas aeruginosa (strain PA7))).